A 359-amino-acid polypeptide reads, in one-letter code: Peptide chain release factor 1 (359 aa).

At Gln235 the chain carries N5-methylglutamine.

This sequence belongs to the prokaryotic/mitochondrial release factor family. Methylated by PrmC. Methylation increases the termination efficiency of RF1.

Its subcellular location is the cytoplasm. In terms of biological role, peptide chain release factor 1 directs the termination of translation in response to the peptide chain termination codons UAG and UAA. The chain is Peptide chain release factor 1 from Nitrosomonas europaea (strain ATCC 19718 / CIP 103999 / KCTC 2705 / NBRC 14298).